Here is a 371-residue protein sequence, read N- to C-terminus: Queuine tRNA-ribosyltransferase (371 aa).

The active-site Proton acceptor is the D92. Residues 92–96, D147, Q190, and G217 each bind substrate; that span reads DSGGF. Residues 248–254 are RNA binding; the sequence is GVGKPID. Catalysis depends on D267, which acts as the Nucleophile. The interval 272–276 is RNA binding; important for wobble base 34 recognition; sequence TRSGR.

Belongs to the queuine tRNA-ribosyltransferase family. In terms of assembly, homodimer. Within each dimer, one monomer is responsible for RNA recognition and catalysis, while the other monomer binds to the replacement base PreQ1.

The catalysed reaction is 7-aminomethyl-7-carbaguanine + guanosine(34) in tRNA = 7-aminomethyl-7-carbaguanosine(34) in tRNA + guanine. It participates in tRNA modification; tRNA-queuosine biosynthesis. Catalyzes the base-exchange of a guanine (G) residue with the queuine precursor 7-aminomethyl-7-deazaguanine (PreQ1) at position 34 (anticodon wobble position) in tRNAs with GU(N) anticodons (tRNA-Asp, -Asn, -His and -Tyr). Catalysis occurs through a double-displacement mechanism. The nucleophile active site attacks the C1' of nucleotide 34 to detach the guanine base from the RNA, forming a covalent enzyme-RNA intermediate. The proton acceptor active site deprotonates the incoming PreQ1, allowing a nucleophilic attack on the C1' of the ribose to form the product. After dissociation, two additional enzymatic reactions on the tRNA convert PreQ1 to queuine (Q), resulting in the hypermodified nucleoside queuosine (7-(((4,5-cis-dihydroxy-2-cyclopenten-1-yl)amino)methyl)-7-deazaguanosine). The chain is Queuine tRNA-ribosyltransferase from Caulobacter vibrioides (strain ATCC 19089 / CIP 103742 / CB 15) (Caulobacter crescentus).